The following is a 332-amino-acid chain: Succinylglutamate desuccinylase (332 aa).

Positions 59, 62, and 151 each coordinate Zn(2+). E215 is a catalytic residue.

This sequence belongs to the AspA/AstE family. Succinylglutamate desuccinylase subfamily. The cofactor is Zn(2+).

It carries out the reaction N-succinyl-L-glutamate + H2O = L-glutamate + succinate. It functions in the pathway amino-acid degradation; L-arginine degradation via AST pathway; L-glutamate and succinate from L-arginine: step 5/5. Functionally, transforms N(2)-succinylglutamate into succinate and glutamate. In Pseudomonas aeruginosa (strain UCBPP-PA14), this protein is Succinylglutamate desuccinylase.